A 1289-amino-acid chain; its full sequence is SH3 domain and tetratricopeptide repeat-containing protein 2 (1289 aa).

SH3 domains follow at residues 176–239 (EGHF…PLPV) and 267–330 (IGRG…LDSC). Positions 393-442 (SQPEGFREARSGGTWMERQTIGSRRSSGSGDSSPEEDELISASSDSYHLP) are disordered. Over residues 414–424 (GSRRSSGSGDS) the composition is skewed to low complexity. TPR repeat units follow at residues 529-562 (ARLC…LDGA), 758-791 (RTLC…GKLL), 837-870 (GVVH…AREM), 1002-1038 (GQLL…FVDL), 1085-1119 (LKLY…LARR), 1120-1153 (MKAL…ATLA), 1167-1200 (LVAF…CPPW), and 1211-1245 (AKVY…AVLM).

The polypeptide is SH3 domain and tetratricopeptide repeat-containing protein 2 (Sh3tc2) (Mus musculus (Mouse)).